A 313-amino-acid polypeptide reads, in one-letter code: Pyrimidine-specific ribonucleoside hydrolase RihA (313 aa).

H240 is a catalytic residue.

The protein belongs to the IUNH family. RihA subfamily.

Hydrolyzes cytidine or uridine to ribose and cytosine or uracil, respectively. The protein is Pyrimidine-specific ribonucleoside hydrolase RihA of Enterobacter sp. (strain 638).